Reading from the N-terminus, the 346-residue chain is GTPase Obg (346 aa).

An Obg domain is found at 1 to 159 (MQFVDEANIR…RNLGLELSVL (159 aa)). The interval 127–149 (NVHFKSSTNRTPRQCTPGEPGDE) is disordered. A compositionally biased stretch (polar residues) spans 130 to 140 (FKSSTNRTPRQ). One can recognise an OBG-type G domain in the interval 160–333 (ADVGLLGMPN…LVKEVAYGLE (174 aa)). GTP-binding positions include 166–173 (GMPNAGKS), 191–195 (FTTLY), 213–216 (DIPG), 283–286 (NKTD), and 314–316 (SAV). 2 residues coordinate Mg(2+): serine 173 and threonine 193.

The protein belongs to the TRAFAC class OBG-HflX-like GTPase superfamily. OBG GTPase family. Monomer. Mg(2+) serves as cofactor.

It is found in the cytoplasm. Functionally, an essential GTPase which binds GTP, GDP and possibly (p)ppGpp with moderate affinity, with high nucleotide exchange rates and a fairly low GTP hydrolysis rate. Plays a role in control of the cell cycle, stress response, ribosome biogenesis and in those bacteria that undergo differentiation, in morphogenesis control. The sequence is that of GTPase Obg from Hydrogenovibrio crunogenus (strain DSM 25203 / XCL-2) (Thiomicrospira crunogena).